Here is a 334-residue protein sequence, read N- to C-terminus: DnaJ protein homolog 1 (334 aa).

Residues 4-68 (DFYKILGLER…KKRDIFDNYG (65 aa)) enclose the J domain. At S187 the chain carries Phosphoserine.

Its subcellular location is the cytoplasm. In Drosophila melanogaster (Fruit fly), this protein is DnaJ protein homolog 1 (DnaJ-1).